Reading from the N-terminus, the 123-residue chain is Small ribosomal subunit protein uS12 (123 aa).

At aspartate 89 the chain carries 3-methylthioaspartic acid. The tract at residues 104–123 is disordered; that stretch reads TAGVQDRRQGRSKYGAKRPK. Basic residues predominate over residues 113–123; that stretch reads GRSKYGAKRPK.

The protein belongs to the universal ribosomal protein uS12 family. Part of the 30S ribosomal subunit. Contacts proteins S8 and S17. May interact with IF1 in the 30S initiation complex.

With S4 and S5 plays an important role in translational accuracy. Functionally, interacts with and stabilizes bases of the 16S rRNA that are involved in tRNA selection in the A site and with the mRNA backbone. Located at the interface of the 30S and 50S subunits, it traverses the body of the 30S subunit contacting proteins on the other side and probably holding the rRNA structure together. The combined cluster of proteins S8, S12 and S17 appears to hold together the shoulder and platform of the 30S subunit. The protein is Small ribosomal subunit protein uS12 of Oleidesulfovibrio alaskensis (strain ATCC BAA-1058 / DSM 17464 / G20) (Desulfovibrio alaskensis).